The following is a 184-amino-acid chain: Large ribosomal subunit protein uL10 (184 aa).

This sequence belongs to the universal ribosomal protein uL10 family. Part of the ribosomal stalk of the 50S ribosomal subunit. The N-terminus interacts with L11 and the large rRNA to form the base of the stalk. The C-terminus forms an elongated spine to which L12 dimers bind in a sequential fashion forming a multimeric L10(L12)X complex.

Forms part of the ribosomal stalk, playing a central role in the interaction of the ribosome with GTP-bound translation factors. This Gluconobacter oxydans (strain 621H) (Gluconobacter suboxydans) protein is Large ribosomal subunit protein uL10.